A 236-amino-acid polypeptide reads, in one-letter code: Conserved regulator of innate immunity protein 3 (236 aa).

A mitochondrion-targeting transit peptide spans 1 to 36 (MNTASLVRSLSRVALRSSQVVRMAAPRHFSQSAKVL).

Belongs to the MAM33 family.

The protein localises to the mitochondrion matrix. The sequence is that of Conserved regulator of innate immunity protein 3 (cri-3) from Caenorhabditis elegans.